Here is a 346-residue protein sequence, read N- to C-terminus: N-acetyl-gamma-glutamyl-phosphate reductase (346 aa).

The active site involves Cys151.

The protein belongs to the NAGSA dehydrogenase family. Type 1 subfamily.

It is found in the cytoplasm. The catalysed reaction is N-acetyl-L-glutamate 5-semialdehyde + phosphate + NADP(+) = N-acetyl-L-glutamyl 5-phosphate + NADPH + H(+). It participates in amino-acid biosynthesis; L-arginine biosynthesis; N(2)-acetyl-L-ornithine from L-glutamate: step 3/4. Functionally, catalyzes the NADPH-dependent reduction of N-acetyl-5-glutamyl phosphate to yield N-acetyl-L-glutamate 5-semialdehyde. The chain is N-acetyl-gamma-glutamyl-phosphate reductase from Ehrlichia canis (strain Jake).